The sequence spans 103 residues: MSGRGKGGKGLGKGGAKRHRRVLRDNIQGITKPAIRRLARRGGVKRISGLIYEETRGVLKVFLENVIRDAVTYTEHAKRKTVTAMDVVYALKRQGRTLYGFGG.

The span at 1–14 (MSGRGKGGKGLGKG) shows a compositional bias: gly residues. Positions 1 to 20 (MSGRGKGGKGLGKGGAKRHR) are disordered. Ser-2 is modified (N-acetylserine). Lys-6 and Lys-13 each carry N6-acetyl-N6-methyllysine; alternate. Lys-17 carries the N6-acetyllysine modification. Residues 17–21 (KRHRR) mediate DNA binding.

Belongs to the histone H4 family. As to quaternary structure, the nucleosome is a histone octamer containing two molecules each of H2A, H2B, H3 and H4 assembled in one H3-H4 heterotetramer and two H2A-H2B heterodimers. The octamer wraps approximately 147 bp of DNA.

Its subcellular location is the nucleus. The protein resides in the chromosome. Its function is as follows. Core component of nucleosome. Nucleosomes wrap and compact DNA into chromatin, limiting DNA accessibility to the cellular machineries which require DNA as a template. Histones thereby play a central role in transcription regulation, DNA repair, DNA replication and chromosomal stability. DNA accessibility is regulated via a complex set of post-translational modifications of histones, also called histone code, and nucleosome remodeling. In Mytilus chilensis (Chilean blue mussel), this protein is Histone H4.